Consider the following 55-residue polypeptide: Large ribosomal subunit protein bL33 (55 aa).

Residues 1-11 show a composition bias toward basic and acidic residues; it reads MAKSGRDKIKL. The disordered stretch occupies residues 1–28; sequence MAKSGRDKIKLESTAGTGHFYTTTKNKR. Positions 14-24 are enriched in polar residues; it reads TAGTGHFYTTT.

The protein belongs to the bacterial ribosomal protein bL33 family.

The polypeptide is Large ribosomal subunit protein bL33 (Janthinobacterium sp. (strain Marseille) (Minibacterium massiliensis)).